The sequence spans 401 residues: Inactive (1R,4R,5S)-(-)-guaia-6,10(14)-diene synthase (401 aa).

The tract at residues 1–20 is disordered; the sequence is MVKFDSGSESEMTNGDELHI. The Mg(2+) site is built by aspartate 134 and glutamate 139. Positions 134–138 match the DDXXD motif motif; sequence DDQFD. A substrate-binding site is contributed by arginine 242. Serine 292 contributes to the Mg(2+) binding site. Lysine 295 is a substrate binding site. Residue aspartate 296 participates in Mg(2+) binding. 375-376 lines the substrate pocket; sequence RY.

The protein belongs to the terpene synthase family. Requires Mg(2+) as cofactor.

This Gibberella fujikuroi (strain CBS 195.34 / IMI 58289 / NRRL A-6831) (Bakanae and foot rot disease fungus) protein is Inactive (1R,4R,5S)-(-)-guaia-6,10(14)-diene synthase.